Here is a 203-residue protein sequence, read N- to C-terminus: Small ribosomal subunit protein uS4 (203 aa).

Residues 93–156 (TRLDNLVFRL…QNLAIVNEAI (64 aa)) form the S4 RNA-binding domain.

It belongs to the universal ribosomal protein uS4 family. In terms of assembly, part of the 30S ribosomal subunit. Contacts protein S5. The interaction surface between S4 and S5 is involved in control of translational fidelity.

Functionally, one of the primary rRNA binding proteins, it binds directly to 16S rRNA where it nucleates assembly of the body of the 30S subunit. With S5 and S12 plays an important role in translational accuracy. This chain is Small ribosomal subunit protein uS4, found in Lacticaseibacillus casei (strain BL23) (Lactobacillus casei).